A 209-amino-acid polypeptide reads, in one-letter code: Immunoglobulin lambda-like polypeptide 1 (209 aa).

Positions 1–30 are cleaved as a signal peptide; sequence MKLRVGQTLGTIPRQCEVLLLLLLLGLVDG. Positions 93-104 are j region; the sequence is VFGGGTQLTILG. A c region region spans residues 105-209; sequence QPKSDPLVTL…EKSVSPAECS (105 aa). Residues 110-204 enclose the Ig-like C1-type domain; it reads PLVTLFLPSL…EGNTVEKSVS (95 aa). A disulfide bridge links Cys131 with Cys190.

As to quaternary structure, interacts with VPREB1A. Interacts with SYNV1/HRD1 (via N-terminus); this interaction leads to increased IGLL1 ubiquitination and degradation in pre-B cells, possibly through a lysosomal, not proteasomal, pathway. As to expression, selectively expressed in pre-B lymphocytes.

Its subcellular location is the endoplasmic reticulum. The protein localises to the secreted. Its function is as follows. Critical for B-cell development. This is Immunoglobulin lambda-like polypeptide 1 (Igll1) from Mus musculus (Mouse).